The following is a 307-amino-acid chain: Ribosomal RNA small subunit methyltransferase H (307 aa).

Residues 33-35, D51, F82, D96, and Q103 contribute to the S-adenosyl-L-methionine site; that span reads GGY.

This sequence belongs to the methyltransferase superfamily. RsmH family.

It localises to the cytoplasm. It catalyses the reaction cytidine(1402) in 16S rRNA + S-adenosyl-L-methionine = N(4)-methylcytidine(1402) in 16S rRNA + S-adenosyl-L-homocysteine + H(+). In terms of biological role, specifically methylates the N4 position of cytidine in position 1402 (C1402) of 16S rRNA. This is Ribosomal RNA small subunit methyltransferase H from Rickettsia africae (strain ESF-5).